A 98-amino-acid chain; its full sequence is Large ribosomal subunit protein uL23 (98 aa).

The protein belongs to the universal ribosomal protein uL23 family. Part of the 50S ribosomal subunit. Contacts protein L29, and trigger factor when it is bound to the ribosome.

In terms of biological role, one of the early assembly proteins it binds 23S rRNA. One of the proteins that surrounds the polypeptide exit tunnel on the outside of the ribosome. Forms the main docking site for trigger factor binding to the ribosome. In Roseobacter denitrificans (strain ATCC 33942 / OCh 114) (Erythrobacter sp. (strain OCh 114)), this protein is Large ribosomal subunit protein uL23.